The sequence spans 553 residues: Urocanate hydratase (553 aa).

NAD(+) contacts are provided by residues 45-46 (GG), Gln123, 169-171 (GMG), Asp189, Arg194, 235-236 (NA), 256-260 (QTSAH), 266-267 (YV), Tyr315, and Gly485.

The protein belongs to the urocanase family. It depends on NAD(+) as a cofactor.

Its subcellular location is the cytoplasm. It carries out the reaction 4-imidazolone-5-propanoate = trans-urocanate + H2O. Its pathway is amino-acid degradation; L-histidine degradation into L-glutamate; N-formimidoyl-L-glutamate from L-histidine: step 2/3. Its function is as follows. Catalyzes the conversion of urocanate to 4-imidazolone-5-propionate. The polypeptide is Urocanate hydratase (Staphylococcus saprophyticus subsp. saprophyticus (strain ATCC 15305 / DSM 20229 / NCIMB 8711 / NCTC 7292 / S-41)).